Here is an 84-residue protein sequence, read N- to C-terminus: Acyl carrier protein (84 aa).

Residues 4–79 (NEIFEKVQDI…EVVDFIKSKL (76 aa)) enclose the Carrier domain. An O-(pantetheine 4'-phosphoryl)serine modification is found at serine 39.

Belongs to the acyl carrier protein (ACP) family. In terms of processing, 4'-phosphopantetheine is transferred from CoA to a specific serine of apo-ACP by AcpS. This modification is essential for activity because fatty acids are bound in thioester linkage to the sulfhydryl of the prosthetic group.

It localises to the plastid. The protein localises to the chloroplast. The protein operates within lipid metabolism; fatty acid biosynthesis. Its function is as follows. Carrier of the growing fatty acid chain in fatty acid biosynthesis. In Porphyra purpurea (Red seaweed), this protein is Acyl carrier protein.